A 252-amino-acid polypeptide reads, in one-letter code: Acyl-coenzyme A diphosphatase FITM2 (252 aa).

Residues 1-25 (MAAAVAGSLVDKLVCLWRQPYTRIY) are Cytoplasmic-facing. Residues 26–46 (LPHLFFCISLVGSVLKNAELV) form a helical membrane-spanning segment. The Lumenal portion of the chain corresponds to 47 to 59 (PESYFSSSRNVLN). The helical transmembrane segment at 60-80 (LYFVKVSWGWTIVLLLPFIAY) threads the bilayer. Residues 81 to 94 (SNFYIKSHMFALRR) lie on the Cytoplasmic side of the membrane. Residues 95-115 (LTSLLVATLVWYICTETFFYI) form a helical membrane-spanning segment. Residues 116–156 (EDITGSCYESNTMVVIRGEFDTKAACRKAGFFWDGFDISGH) lie on the Lumenal side of the membrane. H156 is an active-site residue. Residues 157–177 (SFILSYSSLVIMEEMVPMLHI) traverse the membrane as a helical segment. Residues 178–190 (QPAYRNPPLDCLY) lie on the Cytoplasmic side of the membrane. The chain crosses the membrane as a helical span at residues 191–211 (LALNVIVAIWIWMFGCTSVYF). H212 is an active-site residue. Residues 212–223 (HDIIDKILGTSC) are Lumenal-facing. A helical membrane pass occupies residues 224–244 (GILGWYMTYKVWYVKLFSPGL). The Cytoplasmic segment spans residues 245-252 (PPQPKQHT).

The protein belongs to the FIT family. FIT2 subfamily. As to expression, widely expressed.

The protein localises to the endoplasmic reticulum membrane. It carries out the reaction an acyl-CoA + H2O = an acyl-4'-phosphopantetheine + adenosine 3',5'-bisphosphate + 2 H(+). Its function is as follows. Fatty acyl-coenzyme A (CoA) diphosphatase that hydrolyzes fatty acyl-CoA to yield acyl-4'-phosphopantetheine and adenosine 3',5'-bisphosphate. Preferentially hydrolyzes unsaturated long-chain acyl-CoA substrates in the endoplasmic reticulum (ER) lumen. This catalytic activity is required for maintaining ER structure and for lipid droplets (LDs) biogenesis, which are lipid storage organelles involved in maintaining lipid and energy homeostasis. Required for lipid droplet accumulation in liver and intestine during embryogenesis. May directly bind to diacylglycerol (DAGs) and triacylglycerol, which is also important for LD biogenesis. May support directional budding of nacent LDs from the ER into the cytosol by reducing DAG levels at sites of LD formation. May play a role in the regulation of cell morphology, ER morphology and cytoskeletal organization. The protein is Acyl-coenzyme A diphosphatase FITM2 of Danio rerio (Zebrafish).